Reading from the N-terminus, the 473-residue chain is Photosystem II CP43 reaction center protein (473 aa).

The propeptide occupies 1 to 14 (MKTLYSPRRFYPVE). N-acetylthreonine is present on Thr15. Position 15 is a phosphothreonine (Thr15). Transmembrane regions (helical) follow at residues 69–93 (LFEVAHFIPEKPMYEQGLILLPHLA), 134–155 (LIGPETLEESFPFFGYTWKDRN), 178–200 (KALFFGGIYDTWAPGGGDVRKIT), 255–275 (KPFAWTRRAFVWSGEAYLSYS), and 291–312 (WFNNTAYPSEFYGPTGPEASQA). [CaMn4O5] cluster is bound at residue Glu367. A helical membrane pass occupies residues 447–471 (RARAAAAGFEKGIDRDLEPVLFMTP).

It belongs to the PsbB/PsbC family. PsbC subfamily. PSII is composed of 1 copy each of membrane proteins PsbA, PsbB, PsbC, PsbD, PsbE, PsbF, PsbH, PsbI, PsbJ, PsbK, PsbL, PsbM, PsbT, PsbX, PsbY, PsbZ, Psb30/Ycf12, at least 3 peripheral proteins of the oxygen-evolving complex and a large number of cofactors. It forms dimeric complexes. Requires Binds multiple chlorophylls and provides some of the ligands for the Ca-4Mn-5O cluster of the oxygen-evolving complex. It may also provide a ligand for a Cl- that is required for oxygen evolution. PSII binds additional chlorophylls, carotenoids and specific lipids. as cofactor.

It is found in the plastid. It localises to the chloroplast thylakoid membrane. Its function is as follows. One of the components of the core complex of photosystem II (PSII). It binds chlorophyll and helps catalyze the primary light-induced photochemical processes of PSII. PSII is a light-driven water:plastoquinone oxidoreductase, using light energy to abstract electrons from H(2)O, generating O(2) and a proton gradient subsequently used for ATP formation. The protein is Photosystem II CP43 reaction center protein of Gnetum parvifolium (Small-leaved jointfir).